The sequence spans 135 residues: Mediator of RNA polymerase II transcription subunit 10 (135 aa).

Belongs to the Mediator complex subunit 10 family. As to quaternary structure, component of the Mediator complex, which is composed of MED1, MED4, MED6, MED7, MED8, MED9, MED10, MED11, MED12, MED13, MED13L, MED14, MED15, MED16, MED17, MED18, MED19, MED20, MED21, MED22, MED23, MED24, MED25, MED26, MED27, MED29, MED30, MED31, CCNC, CDK8 and CDC2L6/CDK11. The MED12, MED13, CCNC and CDK8 subunits form a distinct module termed the CDK8 module. Mediator containing the CDK8 module is less active than Mediator lacking this module in supporting transcriptional activation. Individual preparations of the Mediator complex lacking one or more distinct subunits have been variously termed ARC, CRSP, DRIP, PC2, SMCC and TRAP.

It is found in the nucleus. Its function is as follows. Component of the Mediator complex, a coactivator involved in the regulated transcription of nearly all RNA polymerase II-dependent genes. Mediator functions as a bridge to convey information from gene-specific regulatory proteins to the basal RNA polymerase II transcription machinery. Mediator is recruited to promoters by direct interactions with regulatory proteins and serves as a scaffold for the assembly of a functional preinitiation complex with RNA polymerase II and the general transcription factors. In Mus musculus (Mouse), this protein is Mediator of RNA polymerase II transcription subunit 10 (Med10).